Here is a 275-residue protein sequence, read N- to C-terminus: Shikimate dehydrogenase (NADP(+)) (275 aa).

Residues 19–21 and T66 each bind shikimate; that span reads SIS. K70 (proton acceptor) is an active-site residue. E82 provides a ligand contact to NADP(+). The shikimate site is built by N91 and D106. Residues 129–133, 153–158, and I219 each bind NADP(+); these read GAGGA and NRTYER. Y221 is a binding site for shikimate. NADP(+) is bound at residue G242.

The protein belongs to the shikimate dehydrogenase family. In terms of assembly, homodimer.

The catalysed reaction is shikimate + NADP(+) = 3-dehydroshikimate + NADPH + H(+). Its pathway is metabolic intermediate biosynthesis; chorismate biosynthesis; chorismate from D-erythrose 4-phosphate and phosphoenolpyruvate: step 4/7. In terms of biological role, involved in the biosynthesis of the chorismate, which leads to the biosynthesis of aromatic amino acids. Catalyzes the reversible NADPH linked reduction of 3-dehydroshikimate (DHSA) to yield shikimate (SA). The chain is Shikimate dehydrogenase (NADP(+)) from Dictyoglomus turgidum (strain DSM 6724 / Z-1310).